Here is a 326-residue protein sequence, read N- to C-terminus: Beta-ketoacyl-[acyl-carrier-protein] synthase III (326 aa).

Catalysis depends on residues C112 and H251. Residues 252 to 256 (QANSR) are ACP-binding. N281 is a catalytic residue.

Belongs to the thiolase-like superfamily. FabH family. In terms of assembly, homodimer.

Its subcellular location is the cytoplasm. It catalyses the reaction malonyl-[ACP] + acetyl-CoA + H(+) = 3-oxobutanoyl-[ACP] + CO2 + CoA. It functions in the pathway lipid metabolism; fatty acid biosynthesis. Its function is as follows. Catalyzes the condensation reaction of fatty acid synthesis by the addition to an acyl acceptor of two carbons from malonyl-ACP. Catalyzes the first condensation reaction which initiates fatty acid synthesis and may therefore play a role in governing the total rate of fatty acid production. Possesses both acetoacetyl-ACP synthase and acetyl transacylase activities. Its substrate specificity determines the biosynthesis of branched-chain and/or straight-chain of fatty acids. This chain is Beta-ketoacyl-[acyl-carrier-protein] synthase III, found in Clostridium botulinum (strain Loch Maree / Type A3).